Here is a 165-residue protein sequence, read N- to C-terminus: Thiol peroxidase (165 aa).

The region spanning 18–165 (PQVGDNLAEF…DYDAALAALN (148 aa)) is the Thioredoxin domain. Catalysis depends on C60, which acts as the Cysteine sulfenic acid (-SOH) intermediate. C60 and C94 are joined by a disulfide.

The protein belongs to the peroxiredoxin family. Tpx subfamily. Homodimer.

The enzyme catalyses a hydroperoxide + [thioredoxin]-dithiol = an alcohol + [thioredoxin]-disulfide + H2O. Thiol-specific peroxidase that catalyzes the reduction of hydrogen peroxide and organic hydroperoxides to water and alcohols, respectively. Plays a role in cell protection against oxidative stress by detoxifying peroxides. The polypeptide is Thiol peroxidase (Corynebacterium glutamicum (strain ATCC 13032 / DSM 20300 / JCM 1318 / BCRC 11384 / CCUG 27702 / LMG 3730 / NBRC 12168 / NCIMB 10025 / NRRL B-2784 / 534)).